A 221-amino-acid polypeptide reads, in one-letter code: GTP-binding nuclear protein Ran-1 (221 aa).

Residues 10–174 (DYPSFKLVIV…LYLARKLAGD (165 aa)) form the Small GTPase Ran-type domain. 21 to 28 (DGGTGKTT) lines the GTP pocket. The interval 40-48 (KKYEPTIGV) is switch-I. GTP-binding positions include G71, 125–128 (NKVD), and 153–155 (SAK). The segment at 71–87 (GQEKFGGLRDGYYIHGQ) is switch-II.

The protein belongs to the small GTPase superfamily. Ran family. In terms of assembly, found in a nuclear export complex with RanGTP, exportin and pre-miRNA.

Its subcellular location is the nucleus. Its function is as follows. GTP-binding protein involved in nucleocytoplasmic transport. Required for the import of protein into the nucleus and also for RNA export. Involved in chromatin condensation and control of cell cycle. This chain is GTP-binding nuclear protein Ran-1 (RAN1), found in Oryza sativa subsp. indica (Rice).